Reading from the N-terminus, the 203-residue chain is dITP/XTP pyrophosphatase (203 aa).

A substrate-binding site is contributed by 7-12 (TGNRDK). Catalysis depends on D73, which acts as the Proton acceptor. D73 is a Mg(2+) binding site. Substrate is bound by residues S74, 155–158 (FGYD), K178, and 183–184 (HR).

Belongs to the HAM1 NTPase family. As to quaternary structure, homodimer. The cofactor is Mg(2+).

It carries out the reaction XTP + H2O = XMP + diphosphate + H(+). The enzyme catalyses dITP + H2O = dIMP + diphosphate + H(+). The catalysed reaction is ITP + H2O = IMP + diphosphate + H(+). Functionally, pyrophosphatase that catalyzes the hydrolysis of nucleoside triphosphates to their monophosphate derivatives, with a high preference for the non-canonical purine nucleotides XTP (xanthosine triphosphate), dITP (deoxyinosine triphosphate) and ITP. Seems to function as a house-cleaning enzyme that removes non-canonical purine nucleotides from the nucleotide pool, thus preventing their incorporation into DNA/RNA and avoiding chromosomal lesions. In Wolinella succinogenes (strain ATCC 29543 / DSM 1740 / CCUG 13145 / JCM 31913 / LMG 7466 / NCTC 11488 / FDC 602W) (Vibrio succinogenes), this protein is dITP/XTP pyrophosphatase.